Consider the following 88-residue polypeptide: MLEDKDRRIQELYASLLEMSERAVQYPAKGHQTPMLCVAREFNCLRAITGQKVHVTKMKRELTDAAELVIDAMRPNPQVDLNNFVNRV.

This is an uncharacterized protein from Orgyia pseudotsugata (Douglas-fir tussock moth).